Reading from the N-terminus, the 256-residue chain is Small ribosomal subunit protein eS1 (256 aa).

A compositionally biased stretch (basic residues) spans 1 to 18 (MAVGKNKRLSKGKKGLKK). The segment at 1-20 (MAVGKNKRLSKGKKGLKKKA) is disordered. At Ala-2 the chain carries N-acetylalanine; partial.

The protein belongs to the eukaryotic ribosomal protein eS1 family. In terms of assembly, component of the small ribosomal subunit. Mature ribosomes consist of a small (40S) and a large (60S) subunit. The 40S subunit contains about 33 different proteins and 1 molecule of RNA (18S). The 60S subunit contains about 49 different proteins and 3 molecules of RNA (25S, 5.8S and 5S).

It localises to the cytoplasm. The sequence is that of Small ribosomal subunit protein eS1 from Chaetomium globosum (strain ATCC 6205 / CBS 148.51 / DSM 1962 / NBRC 6347 / NRRL 1970) (Soil fungus).